Reading from the N-terminus, the 307-residue chain is tRNA dimethylallyltransferase (307 aa).

7-14 (GPTAGGKT) contributes to the ATP binding site. 9–14 (TAGGKT) serves as a coordination point for substrate. Positions 32–35 (DSRQ) are interaction with substrate tRNA.

It belongs to the IPP transferase family. In terms of assembly, monomer. Requires Mg(2+) as cofactor.

It catalyses the reaction adenosine(37) in tRNA + dimethylallyl diphosphate = N(6)-dimethylallyladenosine(37) in tRNA + diphosphate. Catalyzes the transfer of a dimethylallyl group onto the adenine at position 37 in tRNAs that read codons beginning with uridine, leading to the formation of N6-(dimethylallyl)adenosine (i(6)A). The polypeptide is tRNA dimethylallyltransferase (Elusimicrobium minutum (strain Pei191)).